The primary structure comprises 215 residues: Uridine kinase (215 aa).

16–23 (GASASGKS) is a binding site for ATP.

It belongs to the uridine kinase family.

It is found in the cytoplasm. The catalysed reaction is uridine + ATP = UMP + ADP + H(+). The enzyme catalyses cytidine + ATP = CMP + ADP + H(+). It functions in the pathway pyrimidine metabolism; CTP biosynthesis via salvage pathway; CTP from cytidine: step 1/3. Its pathway is pyrimidine metabolism; UMP biosynthesis via salvage pathway; UMP from uridine: step 1/1. The protein is Uridine kinase of Aliivibrio salmonicida (strain LFI1238) (Vibrio salmonicida (strain LFI1238)).